Consider the following 326-residue polypeptide: Triacylglycerol lipase 2 (326 aa).

The (A/G)XSXG lipase motif motif lies at 142-146 (AHSMG).

Interacts with MIA40; forms mixed disulfide intermediates with MIA40.

It localises to the mitochondrion. The protein resides in the mitochondrion intermembrane space. It carries out the reaction a triacylglycerol + H2O = a diacylglycerol + a fatty acid + H(+). It catalyses the reaction 1,2,3-tri-(9Z-octadecenoyl)-glycerol + H2O = di-(9Z)-octadecenoylglycerol + (9Z)-octadecenoate + H(+). The catalysed reaction is 1,2,3-tributanoylglycerol + H2O = dibutanoylglycerol + butanoate + H(+). The enzyme catalyses 1,2,3-trioctanoylglycerol + H2O = dioctanoylglycerol + octanoate + H(+). It carries out the reaction di-(9Z)-octadecenoylglycerol + H2O = (9Z-octadecenoyl)-glycerol + (9Z)-octadecenoate + H(+). It catalyses the reaction dioctanoylglycerol + H2O = octanoylglycerol + octanoate + H(+). Its function is as follows. Mitochondrial triacylglycerol (TAG) lipase with activity toward long-chain diacylglycerols (DAGs) and triacylglycerols (TAGs). Involved in mitochondrial lipid metabolism. This chain is Triacylglycerol lipase 2 (TGL2), found in Saccharomyces cerevisiae (strain ATCC 204508 / S288c) (Baker's yeast).